The chain runs to 160 residues: Eukaryotic translation initiation factor 5A (160 aa).

Over residues 1 to 10 (MSDDDHHFES) the composition is skewed to basic and acidic residues. Residues 1–23 (MSDDDHHFESSADAGASKTYPQQ) are disordered. Residue Lys-52 is modified to Hypusine.

Belongs to the eIF-5A family. Post-translationally, lys-52 undergoes hypusination, a unique post-translational modification that consists in the addition of a butylamino group from spermidine to lysine side chain, leading to the formation of the unusual amino acid hypusine. eIF-5As are the only known proteins to undergo this modification, which is essential for their function.

Its function is as follows. Translation factor that promotes translation elongation and termination, particularly upon ribosome stalling at specific amino acid sequence contexts. Binds between the exit (E) and peptidyl (P) site of the ribosome and promotes rescue of stalled ribosome: specifically required for efficient translation of polyproline-containing peptides as well as other motifs that stall the ribosome. Acts as a ribosome quality control (RQC) cofactor by joining the RQC complex to facilitate peptidyl transfer during CAT tailing step. This Dianthus caryophyllus (Carnation) protein is Eukaryotic translation initiation factor 5A.